The sequence spans 385 residues: S-adenosylmethionine synthase (385 aa).

H16 lines the ATP pocket. Mg(2+) is bound at residue D18. E44 contacts K(+). L-methionine-binding residues include E57 and Q100. The interval 100 to 110 is flexible loop; that stretch reads QSPDINQGVDR. Residues 164-166, 230-231, D239, 245-246, A262, and K266 each bind ATP; these read DGK, KF, and RK. D239 provides a ligand contact to L-methionine. K270 contacts L-methionine.

Belongs to the AdoMet synthase family. As to quaternary structure, homotetramer; dimer of dimers. Mg(2+) serves as cofactor. It depends on K(+) as a cofactor.

The protein localises to the cytoplasm. The catalysed reaction is L-methionine + ATP + H2O = S-adenosyl-L-methionine + phosphate + diphosphate. It participates in amino-acid biosynthesis; S-adenosyl-L-methionine biosynthesis; S-adenosyl-L-methionine from L-methionine: step 1/1. Catalyzes the formation of S-adenosylmethionine (AdoMet) from methionine and ATP. The overall synthetic reaction is composed of two sequential steps, AdoMet formation and the subsequent tripolyphosphate hydrolysis which occurs prior to release of AdoMet from the enzyme. The protein is S-adenosylmethionine synthase of Helicobacter pylori (strain HPAG1).